A 507-amino-acid polypeptide reads, in one-letter code: Beta-Ala-His dipeptidase (507 aa).

A signal peptide spans 1–26; the sequence is MDPKLGRMAASLLAVLLLLLERGMFS. His132 contacts Zn(2+). Asp134 is an active-site residue. Zn(2+) is bound at residue Asp165. The active-site Proton acceptor is the Glu199. Glu200 is a binding site for Zn(2+). Ser219 is subject to Phosphoserine. Asp228 is a binding site for Zn(2+). Asn322 and Asn382 each carry an N-linked (GlcNAc...) asparagine glycan. His478 contacts Zn(2+).

Belongs to the peptidase M20A family. As to quaternary structure, homodimer. It depends on Zn(2+) as a cofactor. As to expression, found in serum and adult nervous central system. Absent in serum from patients with homocarnosinosis.

The protein localises to the secreted. The catalysed reaction is Preferential hydrolysis of the beta-Ala-|-His dipeptide (carnosine), and also anserine, Xaa-|-His dipeptides and other dipeptides including homocarnosine.. It catalyses the reaction carnosine + H2O = beta-alanine + L-histidine. It carries out the reaction anserine + H2O = N(pros)-methyl-L-histidine + beta-alanine. The enzyme catalyses L-alanyl-L-histidine + H2O = L-histidine + L-alanine. The catalysed reaction is glycyl-L-histidine + H2O = L-histidine + glycine. It catalyses the reaction L-homocarnosine + H2O = 4-aminobutanoate + L-histidine. Its activity is regulated as follows. Activated by cadmium ions. Inhibited by the metal chelator 1,10-o-phenantrolin. The inhibitory concentration 50% (IC(50)) is 5 uM. Functionally, catalyzes the peptide bond hydrolysis in Xaa-His dipeptides, displaying the highest activity toward carnosine (beta-alanyl-L-histidine) and anserine (beta-alanyl-3-methyl-histidine). This Homo sapiens (Human) protein is Beta-Ala-His dipeptidase.